Consider the following 117-residue polypeptide: Immunoglobulin heavy variable 5-10-1 (117 aa).

The N-terminal stretch at 1-19 (MGSTAILALLLAVLQGVCA) is a signal peptide. The framework-1 stretch occupies residues 20 to 44 (EVQLVQSGAEVKKPGESLRISCKGS). The Ig-like domain occupies 20 to 117 (EVQLVQSGAE…SDTAMYYCAR (98 aa)). C41 and C115 form a disulfide bridge. Residues 45 to 52 (GYSFTSYW) form a complementarity-determining-1 region. A framework-2 region spans residues 53 to 69 (ISWVRQMPGKGLEWMGR). Positions 70–77 (IDPSDSYT) are complementarity-determining-2. The interval 78–115 (NYSPSFQGHVTISADKSISTAYLQWSSLKASDTAMYYC) is framework-3. A complementarity-determining-3 region spans residues 116 to 117 (AR).

In terms of assembly, immunoglobulins are composed of two identical heavy chains and two identical light chains; disulfide-linked.

It localises to the secreted. It is found in the cell membrane. Its function is as follows. V region of the variable domain of immunoglobulin heavy chains that participates in the antigen recognition. Immunoglobulins, also known as antibodies, are membrane-bound or secreted glycoproteins produced by B lymphocytes. In the recognition phase of humoral immunity, the membrane-bound immunoglobulins serve as receptors which, upon binding of a specific antigen, trigger the clonal expansion and differentiation of B lymphocytes into immunoglobulins-secreting plasma cells. Secreted immunoglobulins mediate the effector phase of humoral immunity, which results in the elimination of bound antigens. The antigen binding site is formed by the variable domain of one heavy chain, together with that of its associated light chain. Thus, each immunoglobulin has two antigen binding sites with remarkable affinity for a particular antigen. The variable domains are assembled by a process called V-(D)-J rearrangement and can then be subjected to somatic hypermutations which, after exposure to antigen and selection, allow affinity maturation for a particular antigen. The polypeptide is Immunoglobulin heavy variable 5-10-1 (Homo sapiens (Human)).